The primary structure comprises 126 residues: Large ribosomal subunit protein bL20 (126 aa).

This sequence belongs to the bacterial ribosomal protein bL20 family.

Functionally, binds directly to 23S ribosomal RNA and is necessary for the in vitro assembly process of the 50S ribosomal subunit. It is not involved in the protein synthesizing functions of that subunit. The chain is Large ribosomal subunit protein bL20 from Buchnera aphidicola subsp. Baizongia pistaciae (strain Bp).